The primary structure comprises 105 residues: Large ribosomal subunit protein uL24 (105 aa).

This sequence belongs to the universal ribosomal protein uL24 family. As to quaternary structure, part of the 50S ribosomal subunit.

Its function is as follows. One of two assembly initiator proteins, it binds directly to the 5'-end of the 23S rRNA, where it nucleates assembly of the 50S subunit. One of the proteins that surrounds the polypeptide exit tunnel on the outside of the subunit. The sequence is that of Large ribosomal subunit protein uL24 from Vibrio vulnificus (strain YJ016).